The primary structure comprises 594 residues: Arginine--tRNA ligase (594 aa).

Residues 133 to 143 (ANPTGPMNIVS) carry the 'HIGH' region motif.

Belongs to the class-I aminoacyl-tRNA synthetase family. In terms of assembly, monomer.

The protein resides in the cytoplasm. It catalyses the reaction tRNA(Arg) + L-arginine + ATP = L-arginyl-tRNA(Arg) + AMP + diphosphate. The polypeptide is Arginine--tRNA ligase (Leptospira biflexa serovar Patoc (strain Patoc 1 / Ames)).